The following is a 197-amino-acid chain: Isopentenyl-diphosphate Delta-isomerase (197 aa).

Positions 41 and 48 each coordinate Mn(2+). The Nudix hydrolase domain occupies 46–183 (QLHRAFSVFL…AWFMTVLDAA (138 aa)). The active site involves Cys-83. His-85 is a Mn(2+) binding site. Position 103 (Glu-103) interacts with Mg(2+). Residues Glu-130 and Glu-132 each contribute to the Mn(2+) site. Glu-132 is a catalytic residue.

It belongs to the IPP isomerase type 1 family. It depends on Mg(2+) as a cofactor. The cofactor is Mn(2+).

It localises to the cytoplasm. It catalyses the reaction isopentenyl diphosphate = dimethylallyl diphosphate. It participates in isoprenoid biosynthesis; dimethylallyl diphosphate biosynthesis; dimethylallyl diphosphate from isopentenyl diphosphate: step 1/1. Functionally, catalyzes the 1,3-allylic rearrangement of the homoallylic substrate isopentenyl (IPP) to its highly electrophilic allylic isomer, dimethylallyl diphosphate (DMAPP). The chain is Isopentenyl-diphosphate Delta-isomerase from Streptomyces griseus subsp. griseus (strain JCM 4626 / CBS 651.72 / NBRC 13350 / KCC S-0626 / ISP 5235).